Reading from the N-terminus, the 141-residue chain is Hemoglobin subunit alpha (141 aa).

The region spanning 1–141 is the Globin domain; it reads VLSPADKANI…VSTVLTSKYR (141 aa). Serine 3 is modified (phosphoserine). 2 positions are modified to N6-succinyllysine: lysine 7 and lysine 11. N6-acetyllysine; alternate is present on lysine 16. Residue lysine 16 is modified to N6-succinyllysine; alternate. The residue at position 24 (tyrosine 24) is a Phosphotyrosine. Residue serine 35 is modified to Phosphoserine. Lysine 40 is modified (N6-succinyllysine). Serine 49 is subject to Phosphoserine. Histidine 58 is an O2 binding site. Position 87 (histidine 87) interacts with heme b. Serine 102 is subject to Phosphoserine. Residue threonine 108 is modified to Phosphothreonine. 2 positions are modified to phosphoserine: serine 124 and serine 131. Residues threonine 134 and threonine 137 each carry the phosphothreonine modification. A Phosphoserine modification is found at serine 138.

Belongs to the globin family. As to quaternary structure, heterotetramer of two alpha chains and two beta chains. In terms of tissue distribution, red blood cells.

Involved in oxygen transport from the lung to the various peripheral tissues. Its function is as follows. Hemopressin acts as an antagonist peptide of the cannabinoid receptor CNR1. Hemopressin-binding efficiently blocks cannabinoid receptor CNR1 and subsequent signaling. The chain is Hemoglobin subunit alpha (HBA) from Meles meles (Eurasian badger).